Here is a 476-residue protein sequence, read N- to C-terminus: Hyaluronidase-2 (476 aa).

Positions 1–20 (MWTGLGPAVTLALVLVVAWA) are cleaved as a signal peptide. 2 disulfides stabilise this stretch: Cys-47-Cys-343 and Cys-214-Cys-230. Residues Asn-77 and Asn-106 are each glycosylated (N-linked (GlcNAc...) asparagine). Glu-138 (proton donor) is an active-site residue. Asn-340 and Asn-360 each carry an N-linked (GlcNAc...) asparagine glycan. An EGF-like domain is found at 364 to 442 (AAQYCSWAQC…YLGWGGEQCQ (79 aa)). Disulfide bonds link Cys-368–Cys-379, Cys-373–Cys-430, and Cys-432–Cys-441. Gly-451 carries the GPI-anchor amidated glycine lipid modification. Residues 452–476 (ASGAWAGSHLTGLLAVAVLAFTWTS) constitute a propeptide, removed in mature form.

This sequence belongs to the glycosyl hydrolase 56 family. In terms of assembly, interacts with MST1R. (Microbial infection) Interacts with Jaagsiekte sheep retrovirus (JSRV) envelope proteins.

It localises to the cell membrane. It carries out the reaction Random hydrolysis of (1-&gt;4)-linkages between N-acetyl-beta-D-glucosamine and D-glucuronate residues in hyaluronate.. Catalyzes hyaluronan degradation into small fragments that are endocytosed and degraded in lysosomes by HYAL1 and exoglycosidases. Essential for the breakdown of extracellular matrix hyaluronan. The sequence is that of Hyaluronidase-2 (HYAL2) from Ovis aries (Sheep).